Reading from the N-terminus, the 417-residue chain is Transcobalamin-1 (417 aa).

The first 25 residues, 1-25 (MRQSHQLPLVGLLLFSLIPSQLCQS), serve as a signal peptide directing secretion. The globular N-terminal alpha domain stretch occupies residues 24–308 (QSCVVSEKDY…DVTKLLLVPK (285 aa)). Asn90 carries an N-linked (GlcNAc...) asparagine glycan. 143 to 147 (TNYYQ) serves as a coordination point for cyanocob(III)alamin. The cysteines at positions 156 and 198 are disulfide-linked. Residues Asn161, Asn166, and Asn179 are each glycosylated (N-linked (GlcNAc...) asparagine). Residues Asp187 and Gln287 each contribute to the cyanocob(III)alamin site. The tract at residues 309-327 (VQVNITDEPVPVVPTLSPE) is flexible linker. 4 N-linked (GlcNAc...) asparagine glycosylation sites follow: Asn312, Asn328, Asn345, and Asn360. Residues 328–417 (NISVIYCVKI…GIMLSKMESI (90 aa)) form a globular C-terminal beta domain region. Cyanocob(III)alamin contacts are provided by residues 376 to 377 (YI) and 393 to 395 (WEH).

The protein belongs to the eukaryotic cobalamin transport proteins family. In terms of processing, contains about 30% carbohydrates. As to expression, haptocorrins are a family of cobalamin-binding glycoproteins found in blood, salivary and mucosal secretions.

It localises to the secreted. Binds vitamin B12 with femtomolar affinity and protects it from the acidic environment of the stomach. Binds to cobalamin and to cobalamin analogs such as cobinamide. This chain is Transcobalamin-1 (TCN1), found in Sus scrofa (Pig).